We begin with the raw amino-acid sequence, 356 residues long: sn-glycerol-3-phosphate import ATP-binding protein UgpC (356 aa).

The ABC transporter domain occupies 4 to 235; the sequence is LKLQAVTKSW…PASRFVASFI (232 aa). 37–44 contributes to the ATP binding site; the sequence is GPSGCGKS.

Belongs to the ABC transporter superfamily. sn-glycerol-3-phosphate importer (TC 3.A.1.1.3) family. In terms of assembly, the complex is composed of two ATP-binding proteins (UgpC), two transmembrane proteins (UgpA and UgpE) and a solute-binding protein (UgpB).

It is found in the cell inner membrane. The enzyme catalyses sn-glycerol 3-phosphate(out) + ATP + H2O = sn-glycerol 3-phosphate(in) + ADP + phosphate + H(+). In terms of biological role, part of the ABC transporter complex UgpBAEC involved in sn-glycerol-3-phosphate (G3P) import. Responsible for energy coupling to the transport system. This is sn-glycerol-3-phosphate import ATP-binding protein UgpC from Salmonella typhi.